The following is a 217-amino-acid chain: tRNA (guanine-N(7)-)-methyltransferase (217 aa).

E44, E69, D96, and D118 together coordinate S-adenosyl-L-methionine. D118 is an active-site residue. Substrate-binding positions include K122, D154, and 191 to 194; that span reads TEYE.

Belongs to the class I-like SAM-binding methyltransferase superfamily. TrmB family.

The catalysed reaction is guanosine(46) in tRNA + S-adenosyl-L-methionine = N(7)-methylguanosine(46) in tRNA + S-adenosyl-L-homocysteine. It participates in tRNA modification; N(7)-methylguanine-tRNA biosynthesis. Catalyzes the formation of N(7)-methylguanine at position 46 (m7G46) in tRNA. This Bacillus thuringiensis (strain Al Hakam) protein is tRNA (guanine-N(7)-)-methyltransferase.